The primary structure comprises 221 residues: Octanoyltransferase (221 aa).

The BPL/LPL catalytic domain occupies 31 to 213 (DKSADEIWLV…HFVTILGYNK (183 aa)). Substrate is bound by residues 70 to 77 (RGGQITYH), 142 to 144 (SLG), and 155 to 157 (GLA). The active-site Acyl-thioester intermediate is Cys-173.

The protein belongs to the LipB family.

The protein resides in the cytoplasm. The catalysed reaction is octanoyl-[ACP] + L-lysyl-[protein] = N(6)-octanoyl-L-lysyl-[protein] + holo-[ACP] + H(+). The protein operates within protein modification; protein lipoylation via endogenous pathway; protein N(6)-(lipoyl)lysine from octanoyl-[acyl-carrier-protein]: step 1/2. Catalyzes the transfer of endogenously produced octanoic acid from octanoyl-acyl-carrier-protein onto the lipoyl domains of lipoate-dependent enzymes. Lipoyl-ACP can also act as a substrate although octanoyl-ACP is likely to be the physiological substrate. The protein is Octanoyltransferase of Mannheimia succiniciproducens (strain KCTC 0769BP / MBEL55E).